The chain runs to 401 residues: MPVSSSLAYKNYDYDYDSIQPYFYFDNDDEDFYHHQQGQTQPPAPSEDIWKKFELLPTPPLSPSRRQSLSTAEQLEMVSEFLGDDVVNQSFICDADYSQSFIKSIIIQDCMWSGFSAAAKLEKVVSEKLASLHAARKELISDSSSNRLNASYLQDLSTSASECIGPSVVFPYPLTESSKSSKVAPSEPMLVLDTPPNSSSSSGSDSEDEEEEEEEEEEEEEEEEEEEEIDVVTVEKRQKRNEAEVSDSRYPSPLVLKRCHVSTHQHNYAAHPSTRHDQPAVKRLRLESSSSNNSSSNRQGKQRKCTSPRTSDSEDNDKRRTHNVLERQRRNELKLSFFALRDEIPEVANNEKAAKVVILKKATECIHSMQLDEQRLLSIKEQLRRKSEQLKHRLQQLRSSH.

Thr-58 carries O-linked (GlcNAc) threonine glycosylation. The short motif at 76 to 84 is the 9aaTAD element; it reads EMVSEFLGD. Disordered stretches follow at residues 177–251 and 286–325; these read SSKS…SRYP and LESS…HNVL. Over residues 205-230 the composition is skewed to acidic residues; it reads DSEDEEEEEEEEEEEEEEEEEEEEID. Over residues 233–247 the composition is skewed to basic and acidic residues; it reads TVEKRQKRNEAEVSD. Low complexity predominate over residues 288 to 297; it reads SSSSNNSSSN. One can recognise a bHLH domain in the interval 317–369; it reads DKRRTHNVLERQRRNELKLSFFALRDEIPEVANNEKAAKVVILKKATECIHSM. Residues 376 to 397 form a leucine-zipper region; the sequence is LLSIKEQLRRKSEQLKHRLQQL.

Efficient DNA binding requires dimerization with another bHLH protein. Binds DNA as a heterodimer with MAX.

Its subcellular location is the nucleus. Transcription factor that binds DNA in a non-specific manner, yet also specifically recognizes the core sequence 5'-CAC[GA]TG-3'. Activates the transcription of growth-related genes. This chain is Transcriptional regulator Myc-2 (mycb), found in Cyprinus carpio (Common carp).